The following is a 463-amino-acid chain: V-type proton ATPase subunit S1 (463 aa).

The signal sequence occupies residues 1–32 (MMAATVVSRIRTGTGRAPVMWLSLSLVAVAAA). Residues 33-225 (VATEQQVPLV…TAVRPSRVAR (193 aa)) constitute a propeptide that is removed on maturation. The Lumenal segment spans residues 33-412 (VATEQQVPLV…EQFSYASDCA (380 aa)). 8 N-linked (GlcNAc...) asparagine glycosylation sites follow: Asn-164, Asn-255, Asn-267, Asn-290, Asn-297, Asn-344, Asn-351, and Asn-399. Cys-365 and Cys-411 form a disulfide bridge. Residues 413 to 433 (GFFSPGIWMGLLTTLFMLFIF) traverse the membrane as a helical segment. At 434–463 (TYGLHMILSLKTMDRFDDHKGPTITLTQIV) the chain is on the cytoplasmic side.

Belongs to the vacuolar ATPase subunit S1 family. Accessory component of the multisubunit proton-transporting vacuolar (V)-ATPase protein pump. Interacts (via N-terminus) with ATP6AP2 (via N-terminus). Interacts with RNASEK. Interacts with TMEM106B (via C-terminus). Post-translationally, N-glycosylated. As to expression, expressed in brain cortex (at protein level). Highly expressed in islets of Langerhans. Expressed in pancreatic acini, pituitary gland, adrenal gland, lung, brain and bone marrow.

The protein localises to the endoplasmic reticulum membrane. Its subcellular location is the endoplasmic reticulum-Golgi intermediate compartment membrane. It is found in the cytoplasmic vesicle. The protein resides in the secretory vesicle. It localises to the synaptic vesicle membrane. The protein localises to the clathrin-coated vesicle membrane. In terms of biological role, accessory subunit of the proton-transporting vacuolar (V)-ATPase protein pump, which is required for luminal acidification of secretory vesicles. Guides the V-type ATPase into specialized subcellular compartments, such as neuroendocrine regulated secretory vesicles or the ruffled border of the osteoclast, thereby regulating its activity. Involved in membrane trafficking and Ca(2+)-dependent membrane fusion. May play a role in the assembly of the V-type ATPase complex. In aerobic conditions, involved in intracellular iron homeostasis, thus triggering the activity of Fe(2+) prolyl hydroxylase (PHD) enzymes, and leading to HIF1A hydroxylation and subsequent proteasomal degradation. In islets of Langerhans cells, may regulate the acidification of dense-core secretory granules. The polypeptide is V-type proton ATPase subunit S1 (Atp6ap1) (Mus musculus (Mouse)).